The following is a 489-amino-acid chain: Acetyl-coenzyme A carboxylase carboxyl transferase subunit beta, chloroplastic (489 aa).

Residues 222–489 (LWVQCENCYG…FFPLNSNSIK (268 aa)) form the CoA carboxyltransferase N-terminal domain. Zn(2+) is bound by residues Cys-226, Cys-229, Cys-245, and Cys-248. The C4-type zinc finger occupies 226-248 (CENCYGLNYKKFFRSKMNICEQC).

This sequence belongs to the AccD/PCCB family. As to quaternary structure, acetyl-CoA carboxylase is a heterohexamer composed of biotin carboxyl carrier protein, biotin carboxylase and 2 subunits each of ACCase subunit alpha and ACCase plastid-coded subunit beta (accD). Requires Zn(2+) as cofactor.

The protein localises to the plastid. Its subcellular location is the chloroplast stroma. The enzyme catalyses N(6)-carboxybiotinyl-L-lysyl-[protein] + acetyl-CoA = N(6)-biotinyl-L-lysyl-[protein] + malonyl-CoA. Its pathway is lipid metabolism; malonyl-CoA biosynthesis; malonyl-CoA from acetyl-CoA: step 1/1. Component of the acetyl coenzyme A carboxylase (ACC) complex. Biotin carboxylase (BC) catalyzes the carboxylation of biotin on its carrier protein (BCCP) and then the CO(2) group is transferred by the transcarboxylase to acetyl-CoA to form malonyl-CoA. This Buxus microphylla (Littleleaf boxwood) protein is Acetyl-coenzyme A carboxylase carboxyl transferase subunit beta, chloroplastic.